The primary structure comprises 194 residues: Large ribosomal subunit protein eL15 (194 aa).

The disordered stretch occupies residues 164–194 (AGRKARGLRRKGRGAEKVRPSLRANFRKKRR). Residues 166–175 (RKARGLRRKG) show a composition bias toward basic residues.

This sequence belongs to the eukaryotic ribosomal protein eL15 family.

In Archaeoglobus fulgidus (strain ATCC 49558 / DSM 4304 / JCM 9628 / NBRC 100126 / VC-16), this protein is Large ribosomal subunit protein eL15 (rpl15e).